The sequence spans 460 residues: Cysteine--tRNA ligase (460 aa).

Cysteine 28 lines the Zn(2+) pocket. A 'HIGH' region motif is present at residues 30–40; sequence VTIYDLCHIGH. Cysteine 209, histidine 234, and glutamate 238 together coordinate Zn(2+). Positions 266–270 match the 'KMSKS' region motif; it reads KMSKS. Lysine 269 contacts ATP.

Belongs to the class-I aminoacyl-tRNA synthetase family. Monomer. It depends on Zn(2+) as a cofactor.

The protein resides in the cytoplasm. It catalyses the reaction tRNA(Cys) + L-cysteine + ATP = L-cysteinyl-tRNA(Cys) + AMP + diphosphate. This chain is Cysteine--tRNA ligase, found in Vibrio parahaemolyticus serotype O3:K6 (strain RIMD 2210633).